The following is a 308-amino-acid chain: MGKTSKVKKTKAGSSTGNVQSLPFNTDKGQHILKNPGVVNAIVEKSALKATDTVLEVGPGTGNLTVKMLEVAKTVIACEIDPRMIAEVKKRVMGTPLQNKLQVNGGDVMKMEWPFFDVCVANLPYQISSPFVQKLLLHRPLPRYAVLMFQKEFADRLVARPGDKDYSRLSVNVQLLAKVEMLMKVKRTEFRPPPKVDSAVVRIAPKNPPPPVNFVEWEGLLRLCFMRKNKTLMAIFRLSNVIEVIEDNFRKVCSFKNKPIPKDLNMKKVIEETLTASGYGESRARKMRVEDFLALLLAFNKADIHFLS.

Basic residues predominate over residues 1-11 (MGKTSKVKKTK). Residues 1-24 (MGKTSKVKKTKAGSSTGNVQSLPF) are disordered. Positions 12 to 24 (AGSSTGNVQSLPF) are enriched in polar residues. Residues H31, L33, G58, E79, D107, and N122 each coordinate S-adenosyl-L-methionine.

Belongs to the class I-like SAM-binding methyltransferase superfamily. rRNA adenine N(6)-methyltransferase family. Part of the small subunit (SSU) processome, composed of more than 70 proteins and the RNA chaperone small nucleolar RNA (snoRNA) U3.

It localises to the nucleus. It is found in the nucleolus. It carries out the reaction adenosine(1779)/adenosine(1780) in 18S rRNA + 4 S-adenosyl-L-methionine = N(6)-dimethyladenosine(1779)/N(6)-dimethyladenosine(1780) in 18S rRNA + 4 S-adenosyl-L-homocysteine + 4 H(+). In terms of biological role, specifically dimethylates two adjacent adenosines in the loop of a conserved hairpin near the 3'-end of 18S rRNA in the 40S particle. Involved in the pre-rRNA processing steps leading to small-subunit rRNA production independently of its RNA-modifying catalytic activity. Part of the small subunit (SSU) processome, first precursor of the small eukaryotic ribosomal subunit. During the assembly of the SSU processome in the nucleolus, many ribosome biogenesis factors, an RNA chaperone and ribosomal proteins associate with the nascent pre-rRNA and work in concert to generate RNA folding, modifications, rearrangements and cleavage as well as targeted degradation of pre-ribosomal RNA by the RNA exosome. This Caenorhabditis elegans protein is Probable dimethyladenosine transferase.